The primary structure comprises 50 residues: Sperm protamine P1 (50 aa).

Belongs to the protamine P1 family. Cross-linked by interchain disulfide bonds around the DNA-helix. As to expression, testis.

Its subcellular location is the nucleus. The protein resides in the chromosome. Protamines substitute for histones in the chromatin of sperm during the haploid phase of spermatogenesis. They compact sperm DNA into a highly condensed, stable and inactive complex. This Pan paniscus (Pygmy chimpanzee) protein is Sperm protamine P1 (PRM1).